A 181-amino-acid chain; its full sequence is Trans-acting factor D (181 aa).

Functionally, plays a role in 2-micron plasmid partitioning. Antagonizes transcriptional repression of recombinase FLP by REP1-REP2. Regulates both stability and copy number of the plasmid by blocking the formation of the REP1-REP2 repressor complex. The sequence is that of Trans-acting factor D from Saccharomyces cerevisiae (strain ATCC 204508 / S288c) (Baker's yeast).